We begin with the raw amino-acid sequence, 495 residues long: Type-1 histone deacetylase 1 (495 aa).

Aspartate 94 is a substrate binding site. The active-site Proton acceptor is histidine 136. A substrate-binding site is contributed by glycine 144. Residues aspartate 171, histidine 173, and aspartate 259 each contribute to the a divalent metal cation site. Tyrosine 298 serves as a coordination point for substrate. Residues 372–495 form a disordered region; the sequence is PAAAHHDIPP…EDADVDMDSG (124 aa). Over residues 396 to 413 the composition is skewed to basic and acidic residues; that stretch reads DVRISEADRDKKVHHQGE. The segment covering 425–443 has biased composition (polar residues); that stretch reads NYSNGLEATSTSRRNQVSI. A compositionally biased stretch (low complexity) spans 454-480; it reads NSRNNNNNNNNNNNNNNNNNNNSNNNN.

Belongs to the histone deacetylase family. HD type 1 subfamily.

Its subcellular location is the nucleus. The protein localises to the cytoplasm. The catalysed reaction is N(6)-acetyl-L-lysyl-[histone] + H2O = L-lysyl-[histone] + acetate. Functionally, responsible for the deacetylation of lysine residues on the N-terminal part of the core histones (H2A, H2B, H3 and H4). Histone deacetylation plays an important role in transcriptional regulation, cell cycle progression and developmental events. Histone deacetylases act via the formation of large multiprotein complexes. This Dictyostelium discoideum (Social amoeba) protein is Type-1 histone deacetylase 1 (hdaA).